A 70-amino-acid chain; its full sequence is Disintegrin triflavin (70 aa).

A Disintegrin domain is found at 1 to 70; that stretch reads GEECDCGSPS…SADCPRWNGL (70 aa). Intrachain disulfides connect C4-C19, C6-C14, C13-C36, C27-C33, C32-C57, and C45-C64. A Cell attachment site motif is present at residues 49-51; the sequence is RGD.

Belongs to the venom metalloproteinase (M12B) family. P-II subfamily. P-IIa sub-subfamily. Monomer. As to expression, expressed by the venom gland.

The protein resides in the secreted. Inhibits fibrinogen interaction with platelets. Acts by binding to alpha-IIb/beta-3 (ITGA2B/ITGB3) on the platelet surface and inhibits aggregation induced by ADP, thrombin, platelet-activating factor and collagen. The protein is Disintegrin triflavin of Protobothrops flavoviridis (Habu).